Reading from the N-terminus, the 184-residue chain is Ras-related protein O-Krev (184 aa).

10–17 (GSGGVGKS) provides a ligand contact to GTP. The Effector region signature appears at 32–40 (YDPTIEDSY). GTP-binding positions include 57–61 (DTAGT) and 116–119 (NKCD). The residue at position 181 (cysteine 181) is a Cysteine methyl ester. Residue cysteine 181 is the site of S-geranylgeranyl cysteine attachment. Positions 182-184 (TLL) are cleaved as a propeptide — removed in mature form.

It belongs to the small GTPase superfamily. Ras family.

It localises to the cell membrane. The enzyme catalyses GTP + H2O = GDP + phosphate + H(+). The polypeptide is Ras-related protein O-Krev (Diplobatis ommata (Ocellated electric ray)).